The following is a 1142-amino-acid chain: Coiled-coil domain-containing protein 40 (1142 aa).

2 disordered regions span residues 1–197 (MAEP…QVLP) and 251–274 (PSTE…AEDE). 2 stretches are compositionally biased toward basic and acidic residues: residues 11 to 27 (SHPE…EGNN) and 35 to 55 (PEKD…HPEE). The span at 63–96 (AIEEGEVETEGEAAVEGEEEAVSYGDAESEEEYY) shows a compositional bias: acidic residues. At serine 252 the chain carries Phosphoserine. A compositionally biased stretch (acidic residues) spans 265–274 (EGSDEEAEDE). 5 coiled-coil regions span residues 293–319 (AALK…ATKQ), 349–470 (HDRH…QAED), 526–627 (QAKS…LRRK), 684–950 (TSSR…LGQL), and 1005–1054 (VRKA…LTRL).

Belongs to the CCDC40 family.

It is found in the cytoplasm. The protein localises to the cell projection. It localises to the cilium. Required for assembly of dynein regulatory complex (DRC) and inner dynein arm (IDA) complexes, which are responsible for ciliary beat regulation, thereby playing a central role in motility in cilia and flagella. Probably acts together with CCDC39 to form a molecular ruler that determines the 96 nanometer (nm) repeat length and arrangements of components in cilia and flagella. Not required for outer dynein arm complexes assembly. Required for axonemal recruitment of CCDC39. In Homo sapiens (Human), this protein is Coiled-coil domain-containing protein 40.